A 701-amino-acid polypeptide reads, in one-letter code: Elongation factor G (701 aa).

A tr-type G domain is found at 10–290 (AKVRNIGIMA…AVVDYLPSPL (281 aa)). Residues 19-26 (AHIDAGKT), 83-87 (DTPGH), and 137-140 (NKMD) contribute to the GTP site.

It belongs to the TRAFAC class translation factor GTPase superfamily. Classic translation factor GTPase family. EF-G/EF-2 subfamily.

Its subcellular location is the cytoplasm. In terms of biological role, catalyzes the GTP-dependent ribosomal translocation step during translation elongation. During this step, the ribosome changes from the pre-translocational (PRE) to the post-translocational (POST) state as the newly formed A-site-bound peptidyl-tRNA and P-site-bound deacylated tRNA move to the P and E sites, respectively. Catalyzes the coordinated movement of the two tRNA molecules, the mRNA and conformational changes in the ribosome. The chain is Elongation factor G from Tropheryma whipplei (strain TW08/27) (Whipple's bacillus).